Here is a 220-residue protein sequence, read N- to C-terminus: MKAVCLLSGGMDSSTLACLAKHDGYDILALHFSYGQRTEEKERECAKRIARHLNALEFLEVDLTYLKAVGASSLTDYAMQVKAHEDAGDGIPDTYVPFRNANLLSVATSFAEARGADAIYIGVQASDYSGYPDCRPEFIDAFQKVITLGTRPDAGIILKTPFVKLNKAEILKIGMDLNVPYEDTWSCYAENEVACGICGSCHYRLEAFRQIGIQDPIPYR.

ATP is bound at residue 7–17; the sequence is LSGGMDSSTLA. Residues cysteine 187, cysteine 195, cysteine 198, and cysteine 201 each coordinate Zn(2+).

The protein belongs to the QueC family. Requires Zn(2+) as cofactor.

It catalyses the reaction 7-carboxy-7-deazaguanine + NH4(+) + ATP = 7-cyano-7-deazaguanine + ADP + phosphate + H2O + H(+). The protein operates within purine metabolism; 7-cyano-7-deazaguanine biosynthesis. In terms of biological role, catalyzes the ATP-dependent conversion of 7-carboxy-7-deazaguanine (CDG) to 7-cyano-7-deazaguanine (preQ(0)). In Methanospirillum hungatei JF-1 (strain ATCC 27890 / DSM 864 / NBRC 100397 / JF-1), this protein is 7-cyano-7-deazaguanine synthase.